Here is a 644-residue protein sequence, read N- to C-terminus: DNA gyrase subunit B (644 aa).

Residues 429–543 (CEIFLVEGDS…AGYVYIAQPP (115 aa)) form the Toprim domain. Residues glutamate 435, aspartate 508, and aspartate 510 each coordinate Mg(2+).

It belongs to the type II topoisomerase GyrB family. In terms of assembly, heterotetramer, composed of two GyrA and two GyrB chains. In the heterotetramer, GyrA contains the active site tyrosine that forms a transient covalent intermediate with DNA, while GyrB binds cofactors and catalyzes ATP hydrolysis. Requires Mg(2+) as cofactor. The cofactor is Mn(2+). Ca(2+) serves as cofactor.

The protein localises to the cytoplasm. The enzyme catalyses ATP-dependent breakage, passage and rejoining of double-stranded DNA.. A type II topoisomerase that negatively supercoils closed circular double-stranded (ds) DNA in an ATP-dependent manner to modulate DNA topology and maintain chromosomes in an underwound state. Negative supercoiling favors strand separation, and DNA replication, transcription, recombination and repair, all of which involve strand separation. Also able to catalyze the interconversion of other topological isomers of dsDNA rings, including catenanes and knotted rings. Type II topoisomerases break and join 2 DNA strands simultaneously in an ATP-dependent manner. This chain is DNA gyrase subunit B, found in Staphylococcus aureus (strain MRSA252).